The chain runs to 573 residues: ATP-dependent RNA helicase RhlB (573 aa).

The Q motif motif lies at 9-37 (LTFSSFDLHPALVAGLESAGFTRCTPIQA). One can recognise a Helicase ATP-binding domain in the interval 40-220 (LPVALPGGDV…YEHMNEPEKL (181 aa)). 53 to 60 (AQTGTGKT) provides a ligand contact to ATP. The DEAD box motif lies at 166 to 169 (DEAD). One can recognise a Helicase C-terminal domain in the interval 231–393 (RVRQRIYFPS…PVTTELLTPL (163 aa)). Residues 391–400 (TPLPRTPRAT) are compositionally biased toward low complexity. The segment at 391–559 (TPLPRTPRAT…AKPSGSPSLL (169 aa)) is disordered. The span at 402–411 (EGEEVDDDAG) shows a compositional bias: acidic residues. Over residues 419-432 (REAREQRAADEARR) the composition is skewed to basic and acidic residues. Positions 435-449 (GRSGPGGASRSGSGG) are enriched in gly residues. A compositionally biased stretch (basic and acidic residues) spans 450–461 (GRRDGAGADGKP). Positions 476–499 (PAAAPSETPVVVAAAAETPAVTAA) are enriched in low complexity. A compositionally biased stretch (basic residues) spans 505–514 (PRKRRRRRNG). Low complexity-rich tracts occupy residues 516-528 (PVEG…ASTP) and 541-559 (VVAK…PSLL).

It belongs to the DEAD box helicase family. RhlB subfamily. Component of the RNA degradosome, which is a multiprotein complex involved in RNA processing and mRNA degradation.

The protein localises to the cytoplasm. It carries out the reaction ATP + H2O = ADP + phosphate + H(+). Its function is as follows. DEAD-box RNA helicase involved in RNA degradation. Has RNA-dependent ATPase activity and unwinds double-stranded RNA. The protein is ATP-dependent RNA helicase RhlB of Xanthomonas campestris pv. campestris (strain B100).